The following is an 859-amino-acid chain: Transforming growth factor-beta receptor-associated protein 1 (859 aa).

In terms of domain architecture, CNH spans 24-297 (RGLLECVECC…HILQDFEGRV (274 aa)). A CHCR repeat occupies 563–727 (KRPLDEQQSG…LLAVYLGPGP (165 aa)).

The protein belongs to the TRAP1 family. As to quaternary structure, interacts with TGFBR2 and ACVR2B; in the absence of ligand stimulation. Interacts with TGFBR1, ACVRL1, BMPR1A and ACVR1B; in the absence of ligand stimulation and to a less extent. Interacts with SMAD4; the interaction seems to be mutually exclusive with the interaction of SMAD4 and phosphorylated SMAD2. May interact with ALOX5. Interacts with RAB5C. Interacts with VPS8, VPS11 and VPS16. Component of the putative class C core vacuole/endosome tethering (CORVET) complex; the core of which composed of the class C Vps proteins VPS11, VPS16, VPS18 and VPS33A, is associated with VPS8 and TGFBRAP1.

The protein localises to the cytoplasm. It localises to the early endosome. Functionally, plays a role in the TGF-beta/activin signaling pathway. It associates with inactive heteromeric TGF-beta and activin receptor complexes, mainly through the type II receptor, and is released upon activation of signaling. May recruit SMAD4 to the vicinity of the receptor complex and facilitate its interaction with receptor-regulated Smads, such as SMAD2. Plays a role in vesicle-mediated protein trafficking of the endocytic membrane transport pathway. Believed to act as a component of the putative CORVET endosomal tethering complexes which is proposed to be involved in the Rab5-to-Rab7 endosome conversion probably implicating MON1A/B, and via binding SNAREs and SNARE complexes to mediate tethering and docking events during SNARE-mediated membrane fusion. The CORVET complex is proposed to function as a Rab5 effector to mediate early endosome fusion probably in specific endosome subpopulations. Functions predominantly in APPL1-containing endosomes and in degradative but not recycling trafficking of endocytosed cargo. This is Transforming growth factor-beta receptor-associated protein 1 (TGFBRAP1) from Bos taurus (Bovine).